We begin with the raw amino-acid sequence, 234 residues long: ATP synthase subunit delta, chloroplastic (234 aa).

The transit peptide at 1–47 (MASLQQTLFSLQSKLPPSSFQIARSLPLRKTFPIRINNGGNAAGARM) directs the protein to the chloroplast. N-acetylserine is present on Ser-48. Asn-66 carries an N-linked (GlcNAc...) asparagine glycan. A Phosphothreonine modification is found at Thr-234.

The protein belongs to the ATPase delta chain family. In terms of assembly, F-type ATPases have 2 components, F(1) - the catalytic core - and F(0) - the membrane proton channel. F(1) has five subunits: alpha(3), beta(3), gamma(1), delta(1), epsilon(1). CF(0) has four main subunits: a(1), b(1), b'(1) and c(10-14). The alpha and beta chains form an alternating ring which encloses part of the gamma chain. F(1) is attached to F(0) by a central stalk formed by the gamma and epsilon chains, while a peripheral stalk is formed by the delta, b and b' chains.

The protein localises to the plastid. It is found in the chloroplast thylakoid membrane. Its function is as follows. F(1)F(0) ATP synthase produces ATP from ADP in the presence of a proton or sodium gradient. F-type ATPases consist of two structural domains, F(1) containing the extramembraneous catalytic core and F(0) containing the membrane proton channel, linked together by a central stalk and a peripheral stalk. During catalysis, ATP synthesis in the catalytic domain of F(1) is coupled via a rotary mechanism of the central stalk subunits to proton translocation (Potential). Essential for photosynthesis, probably by facilitating electron transport in both photosystems I and II. This protein is part of the stalk that links CF(0) to CF(1). It either transmits conformational changes from CF(0) to CF(1) or is implicated in proton conduction. The protein is ATP synthase subunit delta, chloroplastic of Arabidopsis thaliana (Mouse-ear cress).